The chain runs to 423 residues: Gamma-glutamyl phosphate reductase (423 aa).

It belongs to the gamma-glutamyl phosphate reductase family.

It is found in the cytoplasm. The catalysed reaction is L-glutamate 5-semialdehyde + phosphate + NADP(+) = L-glutamyl 5-phosphate + NADPH + H(+). Its pathway is amino-acid biosynthesis; L-proline biosynthesis; L-glutamate 5-semialdehyde from L-glutamate: step 2/2. Its function is as follows. Catalyzes the NADPH-dependent reduction of L-glutamate 5-phosphate into L-glutamate 5-semialdehyde and phosphate. The product spontaneously undergoes cyclization to form 1-pyrroline-5-carboxylate. This chain is Gamma-glutamyl phosphate reductase, found in Brucella suis (strain ATCC 23445 / NCTC 10510).